Consider the following 176-residue polypeptide: Protein KleF (176 aa).

The polypeptide is Protein KleF (kleF) (Escherichia coli).